The sequence spans 247 residues: MPGRSSTSSGSTRYISFSGIESALSSLKNFQSCISSGMDTVSSVALDLVETQTEVSSEYSMDKAMVEFAKMDRELSHYVKAVQSTINHVKEERPEKVPDLKLLVEKKFLALQDKNSDADFKENEKFVQFKQQLRELKKQYGIHADRENDLTEGVDEDMIVTQSQTNFICPITQLEMKKPVKNKMCGHTYEEEAIVRMIESKHKRKKKACCPKIGCSHTDMRMSDLIPDEALRRAIESHNKKKKRHSE.

Met1 carries the N-acetylmethionine modification. Glycyl lysine isopeptide (Lys-Gly) (interchain with G-Cter in SUMO2) cross-links involve residues Lys90 and Lys107. At Ser116 the chain carries Phosphoserine. Residues Lys125 and Lys130 each participate in a glycyl lysine isopeptide (Lys-Gly) (interchain with G-Cter in SUMO2) cross-link. The SP-RING-type zinc finger occupies 154–240 (VDEDMIVTQS…LRRAIESHNK (87 aa)). Zn(2+)-binding residues include Cys185, His187, Cys210, and Cys215.

This sequence belongs to the NSE2 family. In terms of assembly, component of the SMC5-SMC6 complex which consists at least of SMC5, SMC6, NSMCE2, NSMCE1, NSMCE4A or EID3 and NSMCE3. In terms of processing, sumoylated, possibly via autosumoylation.

The protein localises to the nucleus. Its subcellular location is the chromosome. It localises to the telomere. It is found in the PML body. It participates in protein modification; protein sumoylation. Functionally, E3 SUMO-protein ligase component of the SMC5-SMC6 complex, a complex involved in DNA double-strand break repair by homologous recombination. Is not be required for the stability of the complex. The complex may promote sister chromatid homologous recombination by recruiting the SMC1-SMC3 cohesin complex to double-strand breaks. Acts as an E3 ligase mediating SUMO attachment to various proteins such as SMC6L1 and TSNAX, the shelterin complex subunits TERF1, TERF2, TINF2 and TERF2IP, RAD51AP1, and maybe the cohesin components RAD21 and STAG2. Required for recruitment of telomeres to PML nuclear bodies. Required for sister chromatid cohesion during prometaphase and mitotic progression. This Mus musculus (Mouse) protein is E3 SUMO-protein ligase NSE2 (Nsmce2).